A 162-amino-acid chain; its full sequence is uncharacterized protein (162 aa).

This is an uncharacterized protein from Frog virus 3 (isolate Goorha) (FV-3).